A 327-amino-acid chain; its full sequence is Ribose-phosphate pyrophosphokinase (327 aa).

ATP contacts are provided by residues asparagine 46–glutamate 48 and arginine 105–glutamine 106. Mg(2+)-binding residues include histidine 139 and aspartate 179. Lysine 203 is an active-site residue. D-ribose 5-phosphate-binding positions include arginine 205, aspartate 231, and aspartate 235–threonine 239.

It belongs to the ribose-phosphate pyrophosphokinase family. Class I subfamily. As to quaternary structure, homohexamer. It depends on Mg(2+) as a cofactor.

Its subcellular location is the cytoplasm. It catalyses the reaction D-ribose 5-phosphate + ATP = 5-phospho-alpha-D-ribose 1-diphosphate + AMP + H(+). It functions in the pathway metabolic intermediate biosynthesis; 5-phospho-alpha-D-ribose 1-diphosphate biosynthesis; 5-phospho-alpha-D-ribose 1-diphosphate from D-ribose 5-phosphate (route I): step 1/1. In terms of biological role, involved in the biosynthesis of the central metabolite phospho-alpha-D-ribosyl-1-pyrophosphate (PRPP) via the transfer of pyrophosphoryl group from ATP to 1-hydroxyl of ribose-5-phosphate (Rib-5-P). The chain is Ribose-phosphate pyrophosphokinase from Mycobacterium leprae (strain TN).